The chain runs to 585 residues: Arginine--tRNA ligase (585 aa).

A 'HIGH' region motif is present at residues 131–141; it reads ANPTGPMHVGH.

It belongs to the class-I aminoacyl-tRNA synthetase family. In terms of assembly, monomer.

The protein resides in the cytoplasm. The enzyme catalyses tRNA(Arg) + L-arginine + ATP = L-arginyl-tRNA(Arg) + AMP + diphosphate. This Brucella melitensis biotype 1 (strain ATCC 23456 / CCUG 17765 / NCTC 10094 / 16M) protein is Arginine--tRNA ligase.